The sequence spans 231 residues: Endo-1,4-beta-xylanase A (231 aa).

The signal sequence occupies residues 1 to 19; the sequence is MVSFKSLLVAVSALTGALA. The N-linked (GlcNAc...) asparagine glycan is linked to N32. Residues 41–229 enclose the GH11 domain; the sequence is QVTGNSEGYH…SSGSSSIYVQ (189 aa). The active-site Nucleophile is the E125. E216 (proton donor) is an active-site residue.

This sequence belongs to the glycosyl hydrolase 11 (cellulase G) family.

It is found in the secreted. It carries out the reaction Endohydrolysis of (1-&gt;4)-beta-D-xylosidic linkages in xylans.. The protein operates within glycan degradation; xylan degradation. Inhibited by the proteinaceous endoxylanase inhibitor I from T.aestivum (TAXI-I). Functionally, endo-1,4-beta-xylanase involved in the hydrolysis of xylan, a major structural heterogeneous polysaccharide found in plant biomass representing the second most abundant polysaccharide in the biosphere, after cellulose. Plays an important role in causing fusarium head blight (FHB) on cereal crops. The sequence is that of Endo-1,4-beta-xylanase A (XYLA) from Gibberella zeae (strain ATCC MYA-4620 / CBS 123657 / FGSC 9075 / NRRL 31084 / PH-1) (Wheat head blight fungus).